Reading from the N-terminus, the 430-residue chain is Serine--tRNA ligase (430 aa).

Residue 231 to 233 participates in L-serine binding; that stretch reads TSE. ATP is bound at residue 262 to 264; sequence RSE. Glu-285 lines the L-serine pocket. An ATP-binding site is contributed by 349-352; the sequence is EISS. Position 385 (Ser-385) interacts with L-serine.

It belongs to the class-II aminoacyl-tRNA synthetase family. Type-1 seryl-tRNA synthetase subfamily. As to quaternary structure, homodimer. The tRNA molecule binds across the dimer.

It is found in the cytoplasm. It catalyses the reaction tRNA(Ser) + L-serine + ATP = L-seryl-tRNA(Ser) + AMP + diphosphate + H(+). It carries out the reaction tRNA(Sec) + L-serine + ATP = L-seryl-tRNA(Sec) + AMP + diphosphate + H(+). It functions in the pathway aminoacyl-tRNA biosynthesis; selenocysteinyl-tRNA(Sec) biosynthesis; L-seryl-tRNA(Sec) from L-serine and tRNA(Sec): step 1/1. Catalyzes the attachment of serine to tRNA(Ser). Is also able to aminoacylate tRNA(Sec) with serine, to form the misacylated tRNA L-seryl-tRNA(Sec), which will be further converted into selenocysteinyl-tRNA(Sec). The sequence is that of Serine--tRNA ligase from Roseobacter denitrificans (strain ATCC 33942 / OCh 114) (Erythrobacter sp. (strain OCh 114)).